Reading from the N-terminus, the 341-residue chain is D-aspartate oxidase (341 aa).

Met-1 carries the blocked amino end (Met) modification. Residues Asp-36, Lys-37, Thr-43, Ser-44, Met-50, Gly-307, and Ile-311 each contribute to the FAD site. The Microbody targeting signal signature appears at 339–341 (SKL).

This sequence belongs to the DAMOX/DASOX family. Monomer. Interacts with PEX5; the interaction is direct and required for localization of DDO to the peroxisome. Requires FAD as cofactor. In terms of tissue distribution, in the kidney, expressed in epithelial cells of the proximal tubules and in the liver (at protein level).

It localises to the peroxisome matrix. The protein resides in the cytoplasm. The protein localises to the cytosol. It catalyses the reaction D-aspartate + O2 + H2O = oxaloacetate + H2O2 + NH4(+). The enzyme catalyses D-glutamate + O2 + H2O = H2O2 + 2-oxoglutarate + NH4(+). Its activity is regulated as follows. Inhibited by phenylglyoxal; chemical modification of arginine residues in the enzyme with phenylglyoxal leads to the irreversible loss of activity towards dicarboxylic D-amino acids, paralleled by a transient appearance of activity versus monocarboxylic ones. Functionally, selectively catalyzes the oxidative deamination of acidic amino acids. Suppresses the level of D-aspartate in the brain, an amino acid that can act as an agonist for glutamate receptors. Protects the organism from the toxicity of D-amino acids. May also function in the intestine. The chain is D-aspartate oxidase (DDO) from Bos taurus (Bovine).